Reading from the N-terminus, the 176-residue chain is Variant surface antigen A (176 aa).

Positions 1-29 (MKKSIFSKKLLVSFGSLVALAAIPLIAIS) are cleaved as a signal peptide. Residue Cys-30 is the site of N-palmitoyl cysteine attachment. A lipid anchor (S-diacylglycerol cysteine) is attached at Cys-30. The interval 33–176 (TDNNSSQSQQ…TKTENTQHTS (144 aa)) is disordered. Residues 35 to 121 (NNSSQSQQPG…GSNSESGMNS (87 aa)) are compositionally biased toward low complexity. Repeat unit 1 spans residues 123–135 (KTENTQQSEAPGT). The tract at residues 123–176 (KTENTQQSEAPGTNTGNKTTSESNSESGMNSEKTENTQQSEAPGTKTENTQHTS) is 2.5 X 13 AA repeats. Polar residues predominate over residues 126–142 (NTQQSEAPGTNTGNKTT). Residues 143 to 153 (SESNSESGMNS) are compositionally biased toward low complexity. Copy 2 of the repeat occupies 155–167 (KTENTQQSEAPGT). Positions 158–176 (NTQQSEAPGTKTENTQHTS) are enriched in polar residues. The stretch at 168-176 (KTENTQHTS) is one 3; truncated repeat.

The protein localises to the cell membrane. Functionally, responsible for the antigenic diversity for host adaptation. In Mesomycoplasma hyorhinis (Mycoplasma hyorhinis), this protein is Variant surface antigen A (vlpA).